Consider the following 495-residue polypeptide: MGGIDQDNFSNISWQSDRLGAGSSAAHQHGGQESEQPTHNQAEPEPNYTSMIVHGMGLGDEVLECNVSSPLKENDGTKDAFVSYLVTTHTTFADFQKPDASVRRRFTDFVFLFKTLSREYPASAVPPLPDKQRMEYVRGDRFGNDFTSRRAYSLRRFLARCALHPVLRRSAILHTFLESPDWNATMRSRASRSVSMSGTSSGESGNAHYGGGSAGGGSTGGGNSLANSVFDNFADTFINAFTKVHKPDRRFIEVREKSDKLDEDLAHVEKVVARVSRRETDMEADHKDLAEQFQKLIVLEPGVEGPVRAFAASVEDTAQGLRGLREATEQDYLGSLRDLAAYSGALKNLLKAREQKQLDFEQLTEYLNKSSAERDVLASGGYSSGGALAGAGGFIRSKIEDVRGVDHEQSRRERLRKLELRIEELTVEVERAKKTSELFDEEVIREVSDFERIKRIELKRQFGSLAQSHTDFYDATIDVWEKYVKEMEKEGAVAA.

A compositionally biased stretch (low complexity) spans 20–31; sequence GAGSSAAHQHGG. Positions 20 to 51 are disordered; that stretch reads GAGSSAAHQHGGQESEQPTHNQAEPEPNYTSM. The PX domain occupies 62–184; sequence VLECNVSSPL…TFLESPDWNA (123 aa). Residues Arg105, Thr107, Lys131, and Arg150 each coordinate a 1,2-diacyl-sn-glycero-3-phospho-(1D-myo-inositol-3-phosphate). Residues 193-207 are compositionally biased toward low complexity; that stretch reads SVSMSGTSSGESGNA. The interval 193-219 is disordered; that stretch reads SVSMSGTSSGESGNAHYGGGSAGGGST. The span at 208–219 shows a compositional bias: gly residues; sequence HYGGGSAGGGST. Positions 406–443 form a coiled coil; it reads DHEQSRRERLRKLELRIEELTVEVERAKKTSELFDEEV.

Belongs to the sorting nexin family.

The protein resides in the cytoplasm. It is found in the cytosol. It localises to the preautophagosomal structure membrane. Its subcellular location is the endosome membrane. The protein localises to the mitochondrion membrane. The protein resides in the lipid droplet. Its function is as follows. Sorting nexin, involved in the separation or division of vacuoles throughout the entire life cycle of the cells. Involved in retrieval of late-Golgi SNAREs from post-Golgi endosomes to the trans-Golgi network, for cytoplasm to vacuole transport (Cvt), and autophagy of large cargos including mitophagy, pexophagy and glycophagy. Required for invasion of the rice sheath. This chain is Sorting nexin-4 (SNX4), found in Pyricularia oryzae (strain 70-15 / ATCC MYA-4617 / FGSC 8958) (Rice blast fungus).